The following is a 350-amino-acid chain: Inhibin beta E chain (350 aa).

An N-terminal signal peptide occupies residues 1–19 (MRLPDVQLWLVLLWALVRA). Residues 20 to 236 (QGTGSVCPSC…EPGAGRARRR (217 aa)) constitute a propeptide that is removed on maturation. Residue Asn198 is glycosylated (N-linked (GlcNAc...) asparagine). Disulfide bonds link Cys240/Cys248, Cys247/Cys315, Cys276/Cys347, and Cys280/Cys349.

Belongs to the TGF-beta family. Homodimeric or heterodimeric through association with alpha and beta subunits, linked by one or more disulfide bonds. Inhibins are heterodimers of one alpha and one beta subunit. Activins are homo- or heterodimers of beta subunits only.

Its subcellular location is the secreted. Inhibins and activins inhibit and activate, respectively, the secretion of follitropin by the pituitary gland. Inhibins/activins are involved in regulating a number of diverse functions such as hypothalamic and pituitary hormone secretion, gonadal hormone secretion, germ cell development and maturation, erythroid differentiation, insulin secretion, nerve cell survival, embryonic axial development or bone growth, depending on their subunit composition. Inhibins appear to oppose the functions of activins. Functionally, activin E is a homodimer of INHBE secreted by the liver that plays a crucial role in regulating metabolic homeostasis particularly in lipid metabolism and energy homeostasis. Plays a central role in the regulation of adipose tissue lipolysis by preventing the influx of fatty acids from adipose tissue into the liver. Mechanistically, signals via ACVR1C to activate SMAD2/3 signaling, suppressing PPARG target genes in adipose tissue, thereby reducing liver lipid content and improving glycemic control. Induces beige adipocyte formation and thermogenesis in response to cold exposure. The polypeptide is Inhibin beta E chain (INHBE) (Homo sapiens (Human)).